Consider the following 599-residue polypeptide: Beta-glucuronidase (599 aa).

D-glucuronate contacts are provided by aspartate 160 and asparagine 407. Catalysis depends on glutamate 408, which acts as the Proton donor. D-glucuronate is bound by residues asparagine 462, tyrosine 468, glutamate 501, tryptophan 546, and lysine 565. The active-site Nucleophile is the glutamate 501. The N-K motif motif lies at asparagine 563–lysine 565.

This sequence belongs to the glycosyl hydrolase 2 family.

It catalyses the reaction a beta-D-glucuronoside + H2O = D-glucuronate + an alcohol. Its activity is regulated as follows. Inhibited by a set of synthetic compounds like thio-urea derivatives and analogs. Inhibitors of gut microbial beta-glucuronidases are expected to block the reactivation of glucuronidated cancer drugs, and to alleviate drug-induced GI toxicity. In terms of biological role, displays beta-glucuronidase activity with the artificial substrate p-nitrophenyl-beta-D-glucuronide (PNPG). Is likely capable of scavenging glucuronate from a range of chemically distinct xenobiotic and endobiotic glucuronides present in the gastrointestinal (GI) tract, to be able to utilize these diverse sources of carbon. As part of the GI microbiome, this enzyme would be able to reactivate glucuronide drug conjugates, such reactivated compounds can significantly damage the GI tract. The polypeptide is Beta-glucuronidase (Streptococcus agalactiae serotype V (strain ATCC BAA-611 / 2603 V/R)).